We begin with the raw amino-acid sequence, 299 residues long: Hemolysin C homolog (299 aa).

CBS domains are found at residues 80–142 and 145–202; these read MVPR…NGRL and LIRK…IDDE.

Belongs to the UPF0053 family. Hemolysin C subfamily.

In Rickettsia massiliae (strain Mtu5), this protein is Hemolysin C homolog (tlyC).